Here is an 85-residue protein sequence, read N- to C-terminus: uncharacterized protein (85 aa).

The protein belongs to the SF3B5 family.

This is an uncharacterized protein from Schizosaccharomyces pombe (strain 972 / ATCC 24843) (Fission yeast).